We begin with the raw amino-acid sequence, 368 residues long: 4-hydroxy-3-methylbut-2-en-1-yl diphosphate synthase (flavodoxin) (368 aa).

[4Fe-4S] cluster-binding residues include C271, C274, C306, and E313.

This sequence belongs to the IspG family. The cofactor is [4Fe-4S] cluster.

It carries out the reaction (2E)-4-hydroxy-3-methylbut-2-enyl diphosphate + oxidized [flavodoxin] + H2O + 2 H(+) = 2-C-methyl-D-erythritol 2,4-cyclic diphosphate + reduced [flavodoxin]. The protein operates within isoprenoid biosynthesis; isopentenyl diphosphate biosynthesis via DXP pathway; isopentenyl diphosphate from 1-deoxy-D-xylulose 5-phosphate: step 5/6. In terms of biological role, converts 2C-methyl-D-erythritol 2,4-cyclodiphosphate (ME-2,4cPP) into 1-hydroxy-2-methyl-2-(E)-butenyl 4-diphosphate. The protein is 4-hydroxy-3-methylbut-2-en-1-yl diphosphate synthase (flavodoxin) of Haemophilus influenzae (strain PittGG).